We begin with the raw amino-acid sequence, 274 residues long: Diaminopimelate epimerase (274 aa).

The substrate site is built by asparagine 11, glutamine 44, and asparagine 64. The Proton donor role is filled by cysteine 73. Substrate contacts are provided by residues 74 to 75 (GN), asparagine 157, asparagine 190, and 208 to 209 (ER). The active-site Proton acceptor is cysteine 217. 218-219 (GS) is a binding site for substrate.

The protein belongs to the diaminopimelate epimerase family. In terms of assembly, homodimer.

The protein localises to the cytoplasm. The enzyme catalyses (2S,6S)-2,6-diaminopimelate = meso-2,6-diaminopimelate. Its pathway is amino-acid biosynthesis; L-lysine biosynthesis via DAP pathway; DL-2,6-diaminopimelate from LL-2,6-diaminopimelate: step 1/1. Functionally, catalyzes the stereoinversion of LL-2,6-diaminopimelate (L,L-DAP) to meso-diaminopimelate (meso-DAP), a precursor of L-lysine and an essential component of the bacterial peptidoglycan. The polypeptide is Diaminopimelate epimerase (Haemophilus ducreyi (strain 35000HP / ATCC 700724)).